The chain runs to 423 residues: Imidazolonepropionase (423 aa).

His-78 and His-80 together coordinate Fe(3+). Zn(2+)-binding residues include His-78 and His-80. 4-imidazolone-5-propanoate is bound by residues Arg-87, Tyr-150, and His-183. An N-formimidoyl-L-glutamate-binding site is contributed by Tyr-150. Residue His-247 participates in Fe(3+) binding. His-247 contacts Zn(2+). Glu-250 serves as a coordination point for 4-imidazolone-5-propanoate. Position 322 (Asp-322) interacts with Fe(3+). Asp-322 lines the Zn(2+) pocket. N-formimidoyl-L-glutamate contacts are provided by Asn-324 and Gly-326. Position 327 (Ser-327) interacts with 4-imidazolone-5-propanoate.

It belongs to the metallo-dependent hydrolases superfamily. HutI family. It depends on Zn(2+) as a cofactor. The cofactor is Fe(3+).

The protein resides in the cytoplasm. It catalyses the reaction 4-imidazolone-5-propanoate + H2O = N-formimidoyl-L-glutamate. Its pathway is amino-acid degradation; L-histidine degradation into L-glutamate; N-formimidoyl-L-glutamate from L-histidine: step 3/3. Catalyzes the hydrolytic cleavage of the carbon-nitrogen bond in imidazolone-5-propanoate to yield N-formimidoyl-L-glutamate. It is the third step in the universal histidine degradation pathway. This Bacillus cereus (strain G9842) protein is Imidazolonepropionase.